We begin with the raw amino-acid sequence, 83 residues long: Delta-conotoxin-like Ac6.2 (83 aa).

The signal sequence occupies residues 1–22; the sequence is MKLTCVVIVAVLFLTAWTFVTA. Positions 23–51 are excised as a propeptide; it reads DDSRYGLKNLFPKARHEMKNPEASKLNKR. Disulfide bonds link C54–C69, C61–C73, and C68–C78. P57 and P65 each carry 4-hydroxyproline.

Belongs to the conotoxin O1 superfamily. As to expression, expressed by the venom duct.

The protein localises to the secreted. In terms of biological role, delta-conotoxins bind to site 6 of voltage-gated sodium channels (Nav) and inhibit the inactivation process. The polypeptide is Delta-conotoxin-like Ac6.2 (Conus achatinus (Little frog cone)).